The chain runs to 85 residues: Large ribosomal subunit protein bL27 (85 aa).

A disordered region spans residues 1 to 20; that stretch reads MAHKKAGGSTRNGRDSEAKR.

It belongs to the bacterial ribosomal protein bL27 family.

This chain is Large ribosomal subunit protein bL27, found in Serratia proteamaculans (strain 568).